Here is a 456-residue protein sequence, read N- to C-terminus: Transforming growth factor beta-1-induced transcript 1 protein (456 aa).

An N-acetylmethionine modification is found at M1. The segment at 1–79 (MEDLDALLSD…ATPPFSSSCG (79 aa)) is disordered. The transcription activation stretch occupies residues 1–195 (MEDLDALLSD…DTPSPPGPTS (195 aa)). The interval 1-235 (MEDLDALLSD…CNKPIAGQVV (235 aa)) is interaction with PTK2B/PYK2. The short motif at 3–15 (DLDALLSDLETTT) is the LD motif 1 element. Position 33 is a phosphothreonine (T33). Y55 bears the Phosphotyrosine mark. S63 is modified (phosphoserine). The segment at 78-131 (CGVLGTGLCELDRLLQELNATQFNITDEIMSQFPSSKETAGEQKEDQSEDKKRP) is interaction with PTK2/FAK1. Positions 87-99 (ELDRLLQELNATQ) match the LD motif 2 motif. Residues 109-146 (QFPSSKETAGEQKEDQSEDKKRPSPPPSPSPVLPKPSA) are disordered. Basic and acidic residues predominate over residues 116–130 (TAGEQKEDQSEDKKR). Residues S132, S136, S138, S159, S181, and S189 each carry the phosphoserine modification. Residues 132–142 (SPPPSPSPVLP) are compositionally biased toward pro residues. Positions 152–163 (ELDRLMASLSDF) match the LD motif 3 motif. The tract at residues 166–200 (QNHLPASGPTPPPVPSSMSEDTPSPPGPTSKGSLD) is disordered. The short motif at 198–210 (SLDTMLGLLQSDL) is the LD motif 4 element. LIM zinc-binding domains follow at residues 221 to 280 (GLCG…RFSP), 281 to 338 (RCGL…QLFA), 339 to 398 (PRCQ…RRGS), and 399 to 456 (LCAT…KLFG). Phosphoserine is present on S398. Residue T402 is modified to Phosphothreonine.

It belongs to the paxillin family. Homooligomer. Interacts with CRIP2, HSPB1, ILK, LIMS1, LIMS2, NCK2, NUDT16L1, PAK, PPARG, PTPN12, TCF3, TCF7L2 and VCL. Forms a complex with GIT1 and ARHGEF7. Interacts with AR/androgen receptor in a ligand-dependent manner. Interacts with CSK, LYN, MAPK15, NR3C1, PPARG, PTK2/FAK1, PTK2B/PYK2, SLC6A3, SLC6A4, SMAD3, SRC and talin. Interacts (via LIM zinc-binding domain 2) with CBLC (via RING-type zinc finger); the interaction is direct and enhances CBLC E3 ubiquitin-protein ligase activity. Post-translationally, phosphorylated by gonadotropin-releasing hormone-activated SRC.

The protein localises to the cell junction. It is found in the focal adhesion. It localises to the nucleus matrix. The protein resides in the cytoplasm. Its subcellular location is the cytoskeleton. Functions as a molecular adapter coordinating multiple protein-protein interactions at the focal adhesion complex and in the nucleus. Links various intracellular signaling modules to plasma membrane receptors and regulates the Wnt and TGFB signaling pathways. May also regulate SLC6A3 and SLC6A4 targeting to the plasma membrane hence regulating their activity. In the nucleus, functions as a nuclear receptor coactivator regulating glucocorticoid, androgen, mineralocorticoid and progesterone receptor transcriptional activity. May play a role in the processes of cell growth, proliferation, migration, differentiation and senescence. May have a zinc-dependent DNA-binding activity. The sequence is that of Transforming growth factor beta-1-induced transcript 1 protein (TGFB1I1) from Bos taurus (Bovine).